The sequence spans 159 residues: UPF0756 membrane protein PTH_1668 (159 aa).

4 helical membrane passes run 15–37, 61–81, 117–137, and 138–158; these read ILIT…SSCI, LGLV…KLTI, PEII…LRGT, and PCGP…ASLF.

This sequence belongs to the UPF0756 family.

The protein resides in the cell membrane. This is UPF0756 membrane protein PTH_1668 from Pelotomaculum thermopropionicum (strain DSM 13744 / JCM 10971 / SI).